A 198-amino-acid chain; its full sequence is 3-isopropylmalate dehydratase small subunit (198 aa).

The protein belongs to the LeuD family. LeuD type 1 subfamily. In terms of assembly, heterodimer of LeuC and LeuD.

The catalysed reaction is (2R,3S)-3-isopropylmalate = (2S)-2-isopropylmalate. Its pathway is amino-acid biosynthesis; L-leucine biosynthesis; L-leucine from 3-methyl-2-oxobutanoate: step 2/4. In terms of biological role, catalyzes the isomerization between 2-isopropylmalate and 3-isopropylmalate, via the formation of 2-isopropylmaleate. In Corynebacterium jeikeium (strain K411), this protein is 3-isopropylmalate dehydratase small subunit.